The sequence spans 213 residues: Pyridoxine/pyridoxamine 5'-phosphate oxidase (213 aa).

FMN contacts are provided by residues 60 to 65, 75 to 76, Lys82, and Gln104; these read RMVLMK and YS. Lys65 provides a ligand contact to substrate. The substrate site is built by Tyr122 and Arg126. FMN-binding positions include 139 to 140 and Trp184; that span reads QS. 190–192 contacts substrate; it reads RLH. Position 194 (Arg194) interacts with FMN.

The protein belongs to the pyridoxamine 5'-phosphate oxidase family. Homodimer. Requires FMN as cofactor.

It catalyses the reaction pyridoxamine 5'-phosphate + O2 + H2O = pyridoxal 5'-phosphate + H2O2 + NH4(+). The enzyme catalyses pyridoxine 5'-phosphate + O2 = pyridoxal 5'-phosphate + H2O2. It participates in cofactor metabolism; pyridoxal 5'-phosphate salvage; pyridoxal 5'-phosphate from pyridoxamine 5'-phosphate: step 1/1. It functions in the pathway cofactor metabolism; pyridoxal 5'-phosphate salvage; pyridoxal 5'-phosphate from pyridoxine 5'-phosphate: step 1/1. Catalyzes the oxidation of either pyridoxine 5'-phosphate (PNP) or pyridoxamine 5'-phosphate (PMP) into pyridoxal 5'-phosphate (PLP). The protein is Pyridoxine/pyridoxamine 5'-phosphate oxidase of Nitrobacter winogradskyi (strain ATCC 25391 / DSM 10237 / CIP 104748 / NCIMB 11846 / Nb-255).